Here is a 337-residue protein sequence, read N- to C-terminus: Mannan polymerase complex subunit mnn9 (337 aa).

The Cytoplasmic segment spans residues M1–R8. Residues I9 to P29 form a helical; Signal-anchor for type II membrane protein membrane-spanning segment. Over S30–E337 the chain is Lumenal.

Belongs to the ANP1/MMN9/VAN1 family.

It is found in the endoplasmic reticulum membrane. It localises to the golgi apparatus membrane. It functions in the pathway protein modification; protein glycosylation. Functionally, required for the addition of the long alpha 1,6-mannose backbone of N-linked glycans on cell wall and periplasmic proteins. This Schizosaccharomyces pombe (strain 972 / ATCC 24843) (Fission yeast) protein is Mannan polymerase complex subunit mnn9.